Here is a 470-residue protein sequence, read N- to C-terminus: Probable G-protein coupled receptor 152 (470 aa).

Positions 1-25 (MDTTMEADLGATGHRPRTELDDEDS) are disordered. The Extracellular portion of the chain corresponds to 1 to 33 (MDTTMEADLGATGHRPRTELDDEDSYPQGGWDT). A helical membrane pass occupies residues 34–54 (VFLVALLLLGLPANGLMAWLA). Residues 55-65 (GSQARHGAGTR) lie on the Cytoplasmic side of the membrane. Residues 66–86 (LALLLLSLALSDFLFLAAAAF) traverse the membrane as a helical segment. The Extracellular portion of the chain corresponds to 87-105 (QILEIRHGGHWPLGTAACR). Cysteine 104 and cysteine 182 are joined by a disulfide. The helical transmembrane segment at 106–126 (FYYFLWGVSYSSGLFLLAALS) threads the bilayer. Over 127–148 (LDRCLLALCPHWYPGHRPVRLP) the chain is Cytoplasmic. The chain crosses the membrane as a helical span at residues 149 to 169 (LWVCAGVWVLATLFSVPWLVF). The Extracellular segment spans residues 170–194 (PEAAVWWYDLVICLDFWDSEELSLR). A helical membrane pass occupies residues 195-215 (MLEVLGGFLPFLLLLVCHVLT). Over 216 to 257 (QATACRTCHRQQQPAACRGFARVARTILSAYVVLRLPYQLAQ) the chain is Cytoplasmic. The helical transmembrane segment at 258–278 (LLYLAFLWDVYSGYLLWEALV) threads the bilayer. Residues 279–281 (YSD) are Extracellular-facing. A helical membrane pass occupies residues 282-302 (YLILLNSCLSPFLCLMASADL). Residues 303 to 470 (RTLLRSVLSS…PEAAPGAGPT (168 aa)) lie on the Cytoplasmic side of the membrane. The disordered stretch occupies residues 322-470 (PGSFTPTEPQ…PEAAPGAGPT (149 aa)). Composition is skewed to polar residues over residues 325-335 (FTPTEPQTQLD) and 348-414 (AQSQ…NVQT). Positions 415-425 (PAPAASSVPSP) are enriched in low complexity.

The protein belongs to the G-protein coupled receptor 1 family.

Its subcellular location is the cell membrane. Its function is as follows. Orphan receptor. This is Probable G-protein coupled receptor 152 (GPR152) from Homo sapiens (Human).